We begin with the raw amino-acid sequence, 376 residues long: GDSL esterase/lipase 2 (376 aa).

The N-terminal stretch at 1–25 (MENSRSTLIIFFAYTTIILIGSINC) is a signal peptide. N36 is a glycosylation site (N-linked (GlcNAc...) asparagine). S46 acts as the Nucleophile in catalysis. Residues N186 and N205 are each glycosylated (N-linked (GlcNAc...) asparagine). Residues D340 and H343 contribute to the active site. The N-linked (GlcNAc...) asparagine glycan is linked to N362.

It belongs to the 'GDSL' lipolytic enzyme family. In terms of tissue distribution, expressed seedlings, roots and stems.

Its subcellular location is the secreted. Functionally, involved in the resistance to the necrotropic bacteria Erwinia carotovora, probably via negative regulation of auxin signaling. Possesses lipase and antimicrobial activities, inhibiting germination of fungal spores (e.g. Alternaria brassicicola). The polypeptide is GDSL esterase/lipase 2 (GLIP2) (Arabidopsis thaliana (Mouse-ear cress)).